We begin with the raw amino-acid sequence, 630 residues long: Sodium-dependent serotonin transporter (630 aa).

At 1 to 87 (METTALNSQK…ERETWGKKVD (87 aa)) the chain is on the cytoplasmic side. Tyr47 is modified (phosphotyrosine). The chain crosses the membrane as a helical span at residues 88–112 (FLLSVIGYAVDLGNIWRFPYVCYQN). The Na(+) site is built by Gly94, Ala96, Val97, Asp98, and Asn101. Asp98 provides a ligand contact to serotonin. Topologically, residues 113-115 (GGG) are extracellular. The chain crosses the membrane as a helical span at residues 116 to 135 (AFLLPYIIMAIFGGIPLFYM). At 136 to 160 (ELALGQYHRNGCISIWRKICPIFKG) the chain is on the cytoplasmic side. Tyr142 bears the Phosphotyrosine mark. A helical transmembrane segment spans residues 161-186 (IGYTICIIAFYIASYYNTIIAWALYY). The Extracellular portion of the chain corresponds to 187 to 252 (LISSFTDRLP…KGLQDVGGVS (66 aa)). Cys200 and Cys209 are oxidised to a cystine. Residues Asn208 and Asn217 are each glycosylated (N-linked (GlcNAc...) asparagine). A helical membrane pass occupies residues 253 to 271 (WQLTLCIMLIFTIIYFSIW). The Cytoplasmic portion of the chain corresponds to 272-277 (KGVKTS). Position 276 is a phosphothreonine (Thr276). Residues 278 to 297 (GKVVWVTATFPYIVLSVLLV) form a helical membrane-spanning segment. At 298-324 (RGATLPGAWKGVLFYLKPNWQKLLETG) the chain is on the extracellular side. The helical transmembrane segment at 325-347 (VWIDAAAQIFFSLGPGFGVLLAF) threads the bilayer. Residue Ser336 participates in Na(+) binding. The Cytoplasmic segment spans residues 348–360 (ASYNKFNNNCYQD). The helical transmembrane segment at 361-380 (ALVTSAVNCMTSFVSGFVIF) threads the bilayer. Asn368 serves as a coordination point for Na(+). Topologically, residues 381 to 421 (TVLGYMAEMRSEDVSEVAKDAGPSLLFITYAEAIANMPAST) are extracellular. Residues 422–443 (FFAIIFFLMLITLGLDSTFAGL) form a helical membrane-spanning segment. Residues Leu434, Asp437, and Ser438 each coordinate Na(+). Thr439 lines the serotonin pocket. The Cytoplasmic portion of the chain corresponds to 444 to 463 (EGVITAVLDEFPHIWAKHRE). The helical transmembrane segment at 464-483 (WFVLAVVITCFFGSLTTLTF) threads the bilayer. The Extracellular segment spans residues 484–494 (GGAYVVKLLEE). Positions 494 and 495 each coordinate serotonin. The helical transmembrane segment at 495–516 (YATGPAVLTVVFIEAIAVSWFY) threads the bilayer. Residues 517 to 538 (GVTQFCSDVKEMLGFSPGWFWR) are Cytoplasmic-facing. Residues 539 to 558 (ICWVAVSPVFLLFIICSFLM) traverse the membrane as a helical segment. The serotonin site is built by Phe556 and Ser559. Residues 559-574 (SPPQLRLFQYSYPHWS) lie on the Extracellular side of the membrane. Residues 575–595 (VILGYCIGTSSVICIPTYITY) form a helical membrane-spanning segment. Over 596–630 (RLVTTPGTLKERIIKSITPETPTEIPCGDICLNAV) the chain is Cytoplasmic. The segment at 616–624 (TPTEIPCGD) is interaction with RAB4A.

The protein belongs to the sodium:neurotransmitter symporter (SNF) (TC 2.A.22) family. SLC6A4 subfamily. In terms of assembly, monomer or homooligomer. Interacts (via C-terminus) with SCAMP2; the interaction is direct and retains transporter molecules intracellularly. Interacts with filamentous actin and STX1A. Interacts (via the N-terminus) with STX1A (via the H3 domain); this interaction regulates SLC4A6 channel conductance. Interacts with SEC23A, SEC24C and PATJ. Interacts with NOS1; the interaction may diminish the cell surface localization of SERT in the brain and, correspondingly, reduce serotonin reuptake. Interacts with TGFB1I1. Interacts with ITGAV:ITGB3. Interacts (via C-terminus) with ITGB3; this interaction regulates SLC6A4 trafficking. Phosphorylation at Thr-276 increases 5-HT uptake and is required for cGMP-mediated SERT regulation. As to expression, expressed in the intestinal crypt epithelial cells (at protein level).

The protein resides in the cell membrane. It is found in the endomembrane system. The protein localises to the endosome membrane. Its subcellular location is the synapse. It localises to the cell junction. The protein resides in the focal adhesion. It is found in the cell projection. The protein localises to the neuron projection. The catalysed reaction is serotonin(out) + K(+)(in) + Na(+)(out) + H(+)(in) = serotonin(in) + K(+)(out) + Na(+)(in) + H(+)(out). Serotonin transporter that cotransports serotonin with one Na(+) ion in exchange for one K(+) ion and possibly one proton in an overall electroneutral transport cycle. Transports serotonin across the plasma membrane from the extracellular compartment to the cytosol thus limiting serotonin intercellular signaling. Essential for serotonin homeostasis in the central nervous system. In the developing somatosensory cortex, acts in glutamatergic neurons to control serotonin uptake and its trophic functions accounting for proper spatial organization of cortical neurons and elaboration of sensory circuits. In the mature cortex, acts primarily in brainstem raphe neurons to mediate serotonin uptake from the synaptic cleft back into the pre-synaptic terminal thus terminating serotonin signaling at the synapse. Modulates mucosal serotonin levels in the gastrointestinal tract through uptake and clearance of serotonin in enterocytes. Required for enteric neurogenesis and gastrointestinal reflexes. Regulates blood serotonin levels by ensuring rapid high affinity uptake of serotonin from plasma to platelets, where it is further stored in dense granules via vesicular monoamine transporters and then released upon stimulation. Mechanistically, the transport cycle starts with an outward-open conformation having Na1(+) and Cl(-) sites occupied. The binding of a second extracellular Na2(+) ion and serotonin substrate leads to structural changes to outward-occluded to inward-occluded to inward-open, where the Na2(+) ion and serotonin are released into the cytosol. Binding of intracellular K(+) ion induces conformational transitions to inward-occluded to outward-open and completes the cycle by releasing K(+) possibly together with a proton bound to Asp-98 into the extracellular compartment. Na1(+) and Cl(-) ions remain bound throughout the transport cycle. Additionally, displays serotonin-induced channel-like conductance for monovalent cations, mainly Na(+) ions. The channel activity is uncoupled from the transport cycle and may contribute to the membrane resting potential or excitability. In Cavia porcellus (Guinea pig), this protein is Sodium-dependent serotonin transporter (SLC6A4).